We begin with the raw amino-acid sequence, 226 residues long: Late expression factor 7 (226 aa).

Residues 9-58 enclose the F-box domain; the sequence is RAKRIRLPLEIIDTILQYLDPILHAKVVGLTTRVKCRLLRDNNVEDYLKL.

As to quaternary structure, interacts with host S-phase kinase-associated protein 1/SKP1.

The protein resides in the host nucleus. It participates in protein degradation; proteasomal ubiquitin-dependent pathway. In terms of biological role, F-box protein that manipulates the host DNA damage response (DRR) in order to promote viral multiplication. Acts as a substrate recognition component of SKP1/Cullin/F-box (SCF) complexes for targeted protein polyubiquitination. The chain is Late expression factor 7 (LEF-7) from Lepidoptera (butterflies and moths).